The following is a 76-amino-acid chain: Exodeoxyribonuclease 7 small subunit (76 aa).

This sequence belongs to the XseB family. As to quaternary structure, heterooligomer composed of large and small subunits.

It is found in the cytoplasm. It catalyses the reaction Exonucleolytic cleavage in either 5'- to 3'- or 3'- to 5'-direction to yield nucleoside 5'-phosphates.. In terms of biological role, bidirectionally degrades single-stranded DNA into large acid-insoluble oligonucleotides, which are then degraded further into small acid-soluble oligonucleotides. The sequence is that of Exodeoxyribonuclease 7 small subunit from Lactiplantibacillus plantarum (strain ATCC BAA-793 / NCIMB 8826 / WCFS1) (Lactobacillus plantarum).